A 337-amino-acid chain; its full sequence is SH3 and cysteine-rich domain-containing protein 3 (337 aa).

The segment covering 1 to 11 has biased composition (basic and acidic residues); the sequence is MFKKKAKEEKP. Disordered stretches follow at residues 1-61 and 162-215; these read MFKK…KPHK and NKER…NKKA. Acidic residues predominate over residues 35 to 48; the sequence is ESEEEEEEEEEEPP. Residues 59-110 form a Phorbol-ester/DAG-type zinc finger; that stretch reads PHKFKDHYLKKPKFCDVCARMIVLNNKFGLRCKNCKTNIHHHCQSYVEFQKC. Basic and acidic residues-rich tracts occupy residues 167-176 and 184-212; these read KGQDDKKNPM and LPPKPEEKQEGDVPDGDKKGEKGGQDAKN. SH3 domains are found at residues 220–279 and 280–337; these read MQSH…RVRA and AERV…LQEI.

Component of a calcium channel complex with CACNA1S.

The protein localises to the cytoplasm. It is found in the cell membrane. Its subcellular location is the sarcolemma. The protein resides in the T-tubule. Required for normal excitation-contraction coupling in skeletal muscle and for normal muscle contraction in response to membrane depolarization. Required for normal Ca(2+) release from the sarcplasmic reticulum, which ultimately leads to muscle contraction. Probably functions via its effects on muscle calcium channels. Increases CACNA1S channel activity, in addition to its role in enhancing the expression of CACNA1S at the cell membrane. Has a redundant role in promoting the expression of the calcium channel CACNA1S at the cell membrane. This is SH3 and cysteine-rich domain-containing protein 3 (stac3) from Xenopus tropicalis (Western clawed frog).